Reading from the N-terminus, the 104-residue chain is MKNPFEAMKQLKKLQEKMAKIEEELEQTLVEGTAGGGVVKIIMNAKEEIKEVKIDPEVVNKDEVDILEDLIAAALRDALTKAKEKSAEKMGSLADGLPLPPGLF.

Residues 85 to 104 (KSAEKMGSLADGLPLPPGLF) are disordered.

Belongs to the YbaB/EbfC family. Homodimer.

It localises to the cytoplasm. The protein localises to the nucleoid. Binds to DNA and alters its conformation. May be involved in regulation of gene expression, nucleoid organization and DNA protection. This chain is Nucleoid-associated protein DICTH_1981, found in Dictyoglomus thermophilum (strain ATCC 35947 / DSM 3960 / H-6-12).